The sequence spans 339 residues: Methylthioribose-1-phosphate isomerase (339 aa).

Residues 52-54 (RGA), arginine 89, and glutamine 188 contribute to the substrate site. The Proton donor role is filled by aspartate 229. Position 239–240 (239–240 (NK)) interacts with substrate.

This sequence belongs to the eIF-2B alpha/beta/delta subunits family. MtnA subfamily.

It catalyses the reaction 5-(methylsulfanyl)-alpha-D-ribose 1-phosphate = 5-(methylsulfanyl)-D-ribulose 1-phosphate. It functions in the pathway amino-acid biosynthesis; L-methionine biosynthesis via salvage pathway; L-methionine from S-methyl-5-thio-alpha-D-ribose 1-phosphate: step 1/6. Catalyzes the interconversion of methylthioribose-1-phosphate (MTR-1-P) into methylthioribulose-1-phosphate (MTRu-1-P). The sequence is that of Methylthioribose-1-phosphate isomerase from Anaeromyxobacter dehalogenans (strain 2CP-C).